A 143-amino-acid chain; its full sequence is UPF0201 protein Tneu_0685 (143 aa).

This sequence belongs to the UPF0201 family.

This is UPF0201 protein Tneu_0685 from Pyrobaculum neutrophilum (strain DSM 2338 / JCM 9278 / NBRC 100436 / V24Sta) (Thermoproteus neutrophilus).